The primary structure comprises 151 residues: Ribosome maturation factor RimP (151 aa).

The protein belongs to the RimP family.

The protein resides in the cytoplasm. Functionally, required for maturation of 30S ribosomal subunits. The protein is Ribosome maturation factor RimP of Shewanella frigidimarina (strain NCIMB 400).